A 186-amino-acid chain; its full sequence is Glycerol-3-phosphate acyltransferase 1 (186 aa).

5 consecutive transmembrane segments (helical) span residues 9–29 (MQFL…AYIV), 58–78 (GYFV…VSIA), 85–105 (STFV…PVLF), 121–141 (IAFD…FYLI), and 161–181 (ILYS…VLIL).

This sequence belongs to the PlsY family. As to quaternary structure, probably interacts with PlsX.

It localises to the cell membrane. The enzyme catalyses an acyl phosphate + sn-glycerol 3-phosphate = a 1-acyl-sn-glycero-3-phosphate + phosphate. It functions in the pathway lipid metabolism; phospholipid metabolism. Functionally, catalyzes the transfer of an acyl group from acyl-phosphate (acyl-PO(4)) to glycerol-3-phosphate (G3P) to form lysophosphatidic acid (LPA). This enzyme utilizes acyl-phosphate as fatty acyl donor, but not acyl-CoA or acyl-ACP. The protein is Glycerol-3-phosphate acyltransferase 1 of Bacillus cereus (strain ZK / E33L).